The chain runs to 154 residues: DNA gyrase inhibitor (154 aa).

This sequence belongs to the DNA gyrase inhibitor family. Interacts with DNA gyrase.

It is found in the cytoplasm. In terms of biological role, inhibits the supercoiling activity of DNA gyrase. Acts by inhibiting DNA gyrase at an early step, prior to (or at the step of) binding of DNA by the gyrase. It protects cells against toxins that target DNA gyrase, by inhibiting activity of these toxins and reducing the formation of lethal double-strand breaks in the cell. This Pectobacterium carotovorum subsp. carotovorum (strain PC1) protein is DNA gyrase inhibitor.